A 203-amino-acid chain; its full sequence is Snake venom metalloproteinase fibrolase (203 aa).

Residue Gln-1 is modified to Pyrrolidone carboxylic acid. A Peptidase M12B domain is found at 7–203; sequence RYVQLVIVAD…NNPQCILNKP (197 aa). Disulfide bonds link Cys-118–Cys-198, Cys-158–Cys-182, and Cys-160–Cys-165. Residue His-143 coordinates Zn(2+). Residue Glu-144 is part of the active site. Residues His-147 and His-153 each contribute to the Zn(2+) site.

It belongs to the venom metalloproteinase (M12B) family. P-I subfamily. Monomer. Requires Zn(2+) as cofactor. In terms of tissue distribution, expressed by the venom gland.

Its subcellular location is the secreted. It carries out the reaction Hydrolysis of 14-Ala-|-Leu-15 in insulin B chain and 413-Lys-|-Leu-414 in alpha-chain of fibrinogen.. With respect to regulation, is inhibited by EDTA, o-phenanthroline and tetraethylenepentamine. Snake venom zinc metalloprotease that exhibits direct fibrinolytic activity. This Agkistrodon contortrix contortrix (Southern copperhead) protein is Snake venom metalloproteinase fibrolase.